A 248-amino-acid polypeptide reads, in one-letter code: UDP-N-acetyl-D-mannosaminuronic acid transferase (248 aa).

It belongs to the glycosyltransferase 26 family.

It catalyses the reaction UDP-N-acetyl-alpha-D-mannosaminouronate + N-acetyl-alpha-D-glucosaminyl-di-trans,octa-cis-undecaprenyl diphosphate = beta-D-ManNAcA-(1-&gt;4)-alpha-D-GlcNAc-di-trans,octa-cis-undecaprenyl diphosphate + UDP + H(+). Its pathway is bacterial outer membrane biogenesis; enterobacterial common antigen biosynthesis. Functionally, catalyzes the synthesis of Und-PP-GlcNAc-ManNAcA (Lipid II), the second lipid-linked intermediate involved in enterobacterial common antigen (ECA) synthesis. The sequence is that of UDP-N-acetyl-D-mannosaminuronic acid transferase from Klebsiella pneumoniae subsp. pneumoniae (strain ATCC 700721 / MGH 78578).